The following is a 190-amino-acid chain: dTTP/UTP pyrophosphatase (190 aa).

D70 acts as the Proton acceptor in catalysis.

It belongs to the Maf family. YhdE subfamily. The cofactor is a divalent metal cation.

Its subcellular location is the cytoplasm. The enzyme catalyses dTTP + H2O = dTMP + diphosphate + H(+). It catalyses the reaction UTP + H2O = UMP + diphosphate + H(+). In terms of biological role, nucleoside triphosphate pyrophosphatase that hydrolyzes dTTP and UTP. May have a dual role in cell division arrest and in preventing the incorporation of modified nucleotides into cellular nucleic acids. This is dTTP/UTP pyrophosphatase from Paramagnetospirillum magneticum (strain ATCC 700264 / AMB-1) (Magnetospirillum magneticum).